The following is a 469-amino-acid chain: UDP-N-acetylmuramoylalanine--D-glutamate ligase (469 aa).

ATP is bound at residue 125–131 (GTNGKTT).

This sequence belongs to the MurCDEF family.

The protein resides in the cytoplasm. It catalyses the reaction UDP-N-acetyl-alpha-D-muramoyl-L-alanine + D-glutamate + ATP = UDP-N-acetyl-alpha-D-muramoyl-L-alanyl-D-glutamate + ADP + phosphate + H(+). It participates in cell wall biogenesis; peptidoglycan biosynthesis. In terms of biological role, cell wall formation. Catalyzes the addition of glutamate to the nucleotide precursor UDP-N-acetylmuramoyl-L-alanine (UMA). This is UDP-N-acetylmuramoylalanine--D-glutamate ligase from Prochlorococcus marinus (strain NATL2A).